The primary structure comprises 418 residues: MDRIRIRGGRPLEGVIDISGAKNSALKVMVAGLLTDERLELENVPALADVATMAQLLAQHGIAVEETGAKQLSVGGAITNTEAPYDIVRKMRASILVLGPLLARTGEARVSLPGGCAIGTRPVDLHLKGLEAMGAEIALDGGYINARAPKGLHGATITFPFVSVGATEQLLLTATLAEGETVLVNAAREPEIGDLADCLNKMGADISGIGSDRLTIRGVKALHGARHTILPDRIEAGTYACAAAITGGGVLLRGARMFDLGALASTLGEAGVDVTEVAEGVTVSRRNGLHGTDAMTEPFPGFVTDMQAQFMTLMAVAEGASMITETIFENRFMHVPELNRMGARINVHGSSAIVRGVPGLSGAPVMATDLRASFSLVLAGLAAKGETIVNRVYHLDRGYEAVERKLAACGADIERLRD.

22 to 23 (KN) provides a ligand contact to phosphoenolpyruvate. Arg-92 provides a ligand contact to UDP-N-acetyl-alpha-D-glucosamine. Cys-116 serves as the catalytic Proton donor. A 2-(S-cysteinyl)pyruvic acid O-phosphothioketal modification is found at Cys-116. Residues 121–125 (RPVDL), Asp-305, and Ile-327 contribute to the UDP-N-acetyl-alpha-D-glucosamine site.

It belongs to the EPSP synthase family. MurA subfamily.

It is found in the cytoplasm. It carries out the reaction phosphoenolpyruvate + UDP-N-acetyl-alpha-D-glucosamine = UDP-N-acetyl-3-O-(1-carboxyvinyl)-alpha-D-glucosamine + phosphate. Its pathway is cell wall biogenesis; peptidoglycan biosynthesis. In terms of biological role, cell wall formation. Adds enolpyruvyl to UDP-N-acetylglucosamine. The sequence is that of UDP-N-acetylglucosamine 1-carboxyvinyltransferase from Acidiphilium cryptum (strain JF-5).